A 452-amino-acid chain; its full sequence is Glycine receptor subunit alpha-2 (452 aa).

Residues 1–27 (MYRQLVNILTALFAFFLGTNHFREAFC) form the signal peptide. Topologically, residues 28-256 (KDHDSRSGKH…KFHLERQMGY (229 aa)) are extracellular. N-linked (GlcNAc...) asparagine glycosylation occurs at N72. A glycine-binding site is contributed by R99. R99 contributes to the strychnine binding site. An N-linked (GlcNAc...) asparagine glycan is attached at N103. S163 serves as a coordination point for glycine. C172 and C186 are joined by a disulfide. Zn(2+) is bound by residues E226 and E228. C232 and C243 are joined by a disulfide. T238 serves as a coordination point for glycine. H249 contacts Zn(2+). The helical transmembrane segment at 257 to 278 (YLIQMYIPSLLIVILSWVSFWI) threads the bilayer. Topologically, residues 279–283 (NMDAA) are cytoplasmic. The helical transmembrane segment at 284–304 (PARVALGITTVLTMTTQSSGS) threads the bilayer. Over 305–315 (RASLPKVSYVK) the chain is Extracellular. Residues 316 to 336 (AIDIWMAVCLLFVFAALLEYA) form a helical membrane-spanning segment. The Cytoplasmic segment spans residues 337–420 (AVNFVSRQHK…FVDRAKRIDT (84 aa)). The helical transmembrane segment at 421–441 (ISRAAFPLAFLIFNIFYWITY) threads the bilayer. The Extracellular segment spans residues 442 to 452 (KIIRHEDVHKK).

It belongs to the ligand-gated ion channel (TC 1.A.9) family. Glycine receptor (TC 1.A.9.3) subfamily. GLRA2 sub-subfamily. In terms of assembly, interacts with GLRB. Heteropentamer composed of GLRA2 and GLRB; functional GLRB-GLRA2 heteropentamers contain four GLRA2 subunits and one GLRB subunit, although alternative subunit composition cannot be excluded. Homopentamer (in vitro). Both homopentamers and heteropentamers form functional ion channels, but their characteristics are subtly different. In terms of tissue distribution, detected in the retina inner plexiform layer (at protein level). Detected in neonate retina. Detected in brain. Detected in spinal cord, with higher levels in the dorsal horn.

It localises to the postsynaptic cell membrane. It is found in the synapse. The protein resides in the cell membrane. The protein localises to the cell projection. It catalyses the reaction chloride(in) = chloride(out). Its activity is regulated as follows. Channel opening is triggered by extracellular glycine. Channel opening is also triggered by taurine and beta-alanine. Inhibited by strychnine. Inhibited by picrotoxin. Functionally, subunit of heteromeric glycine-gated chloride channels. Plays a role in synaptic plasticity. Contributes to the generation of inhibitory postsynaptic currents, and is involved in the down-regulation of neuronal excitability. Plays a role in cellular responses to ethanol. In Mus musculus (Mouse), this protein is Glycine receptor subunit alpha-2.